A 652-amino-acid polypeptide reads, in one-letter code: MSQPHRYPIPASLAERTLVSAEQYRKLYEQSINDPDSFWREYAQIVEWITPFQTVKNTTFDPGHVNIRWFEDGTLNVAANCLDRHLQERGDQTAIIWEGDDASQSKTLTYRQLHQAVCRFANVLKAQGIGKGDVVALYMPMVPEAAVAMLACARIGAVHSVIFAGFSPEAIAGRIIDSSAKLVVTADEGLRAGRKIPLKKNIDDALNHPEVKSVNRVIVFRRTGNAIDWQPERDVWWHDAIDGADDTCPPEAMGAEDPLFILYTSGSTGTPKGVLHTTGGYLVYAATTFKYVFDYHPGDVYWCTADVGWVTGHSYLLYGPLACCAITLMFEGVPNWPAASRMAQVVDKHQVNILYTAPTAIRALMAEGDKAITGTHRSSLRIMGSVGEPINPEAWEWYYHKIGNGRCPIVDTWWQTETGGFMITPLPGAMALKPGSAALPFFGVQPALVDNVGTPVDGAGEGNLVITDSWPGQARTLYGDHDRFKQTYFYTFKGMYFSGDGARRDEDGYYWITGRVDDVLNVSGHRLGTSEIESALVAHPKIAEAAVVGMPHNIKGQAIYAYITLNAGETPTPELYNEVRAWMRKEIGAIATPDVLHWTDSLPKTRSGKIMRRILRKIAAGDTGNLGDTSTLADPGVVEKLLEEKHTLTLPS.

Residues Arg191–Arg194, Thr311, and Asn335 each bind CoA. ATP contacts are provided by residues Gly387–Pro389, Asp411–Thr416, Asp500, and Arg515. Ser523 is a binding site for CoA. Residue Arg526 coordinates ATP. The Mg(2+) site is built by Val537, His539, and Ile542. Arg584 contacts CoA. At Lys609 the chain carries N6-acetyllysine.

This sequence belongs to the ATP-dependent AMP-binding enzyme family. Requires Mg(2+) as cofactor. Acetylated. Deacetylation by the SIR2-homolog deacetylase activates the enzyme.

It carries out the reaction acetate + ATP + CoA = acetyl-CoA + AMP + diphosphate. Functionally, catalyzes the conversion of acetate into acetyl-CoA (AcCoA), an essential intermediate at the junction of anabolic and catabolic pathways. Acs undergoes a two-step reaction. In the first half reaction, Acs combines acetate with ATP to form acetyl-adenylate (AcAMP) intermediate. In the second half reaction, it can then transfer the acetyl group from AcAMP to the sulfhydryl group of CoA, forming the product AcCoA. In terms of biological role, enables the cell to use acetate during aerobic growth to generate energy via the TCA cycle, and biosynthetic compounds via the glyoxylate shunt. Acetylates CheY, the response regulator involved in flagellar movement and chemotaxis. The chain is Acetyl-coenzyme A synthetase from Sodalis glossinidius (strain morsitans).